The sequence spans 436 residues: Gamma-glutamyl phosphate reductase (436 aa).

This sequence belongs to the gamma-glutamyl phosphate reductase family.

It localises to the cytoplasm. It catalyses the reaction L-glutamate 5-semialdehyde + phosphate + NADP(+) = L-glutamyl 5-phosphate + NADPH + H(+). It functions in the pathway amino-acid biosynthesis; L-proline biosynthesis; L-glutamate 5-semialdehyde from L-glutamate: step 2/2. In terms of biological role, catalyzes the NADPH-dependent reduction of L-glutamate 5-phosphate into L-glutamate 5-semialdehyde and phosphate. The product spontaneously undergoes cyclization to form 1-pyrroline-5-carboxylate. The polypeptide is Gamma-glutamyl phosphate reductase (Prochlorococcus marinus (strain MIT 9301)).